The sequence spans 348 residues: Dihydroorotate dehydrogenase (quinone) (348 aa).

Residues 60–64 (AGFDK) and Thr-84 each bind FMN. Lys-64 lines the substrate pocket. 109 to 113 (NRLGF) lines the substrate pocket. Asn-138 and Asn-169 together coordinate FMN. Asn-169 is a binding site for substrate. Ser-172 (nucleophile) is an active-site residue. Asn-174 serves as a coordination point for substrate. Residues Lys-207 and Ser-235 each coordinate FMN. Residue 236 to 237 (NT) coordinates substrate. FMN contacts are provided by residues Gly-258, Gly-287, and 308-309 (YS).

This sequence belongs to the dihydroorotate dehydrogenase family. Type 2 subfamily. As to quaternary structure, monomer. Requires FMN as cofactor.

The protein resides in the cell membrane. The catalysed reaction is (S)-dihydroorotate + a quinone = orotate + a quinol. Its pathway is pyrimidine metabolism; UMP biosynthesis via de novo pathway; orotate from (S)-dihydroorotate (quinone route): step 1/1. In terms of biological role, catalyzes the conversion of dihydroorotate to orotate with quinone as electron acceptor. The chain is Dihydroorotate dehydrogenase (quinone) from Parvibaculum lavamentivorans (strain DS-1 / DSM 13023 / NCIMB 13966).